The sequence spans 173 residues: ATP synthase subunit b (173 aa).

Residues 19-39 (IVWSLIILVIVAVFFYKFFMP) form a helical membrane-spanning segment.

This sequence belongs to the ATPase B chain family. F-type ATPases have 2 components, F(1) - the catalytic core - and F(0) - the membrane proton channel. F(1) has five subunits: alpha(3), beta(3), gamma(1), delta(1), epsilon(1). F(0) has three main subunits: a(1), b(2) and c(10-14). The alpha and beta chains form an alternating ring which encloses part of the gamma chain. F(1) is attached to F(0) by a central stalk formed by the gamma and epsilon chains, while a peripheral stalk is formed by the delta and b chains.

It localises to the cell membrane. Its function is as follows. F(1)F(0) ATP synthase produces ATP from ADP in the presence of a proton or sodium gradient. F-type ATPases consist of two structural domains, F(1) containing the extramembraneous catalytic core and F(0) containing the membrane proton channel, linked together by a central stalk and a peripheral stalk. During catalysis, ATP synthesis in the catalytic domain of F(1) is coupled via a rotary mechanism of the central stalk subunits to proton translocation. Functionally, component of the F(0) channel, it forms part of the peripheral stalk, linking F(1) to F(0). The protein is ATP synthase subunit b of Bifidobacterium longum (strain NCC 2705).